A 92-amino-acid chain; its full sequence is DNA-binding protein HU (92 aa).

Belongs to the bacterial histone-like protein family. Homodimer.

Histone-like DNA-binding protein which is capable of wrapping DNA to stabilize it, and thus to prevent its denaturation under extreme environmental conditions. This chain is DNA-binding protein HU (hup), found in Buchnera aphidicola subsp. Baizongia pistaciae (strain Bp).